The sequence spans 130 residues: Small ribosomal subunit protein uS9 (130 aa).

The protein belongs to the universal ribosomal protein uS9 family.

This is Small ribosomal subunit protein uS9 from Mycoplasmoides gallisepticum (strain R(low / passage 15 / clone 2)) (Mycoplasma gallisepticum).